Reading from the N-terminus, the 208-residue chain is Uracil phosphoribosyltransferase (208 aa).

Residues Arg-77, Arg-102, and 129-137 (DPMLATGNS) contribute to the 5-phospho-alpha-D-ribose 1-diphosphate site. Uracil contacts are provided by residues Ile-193 and 198-200 (GDA). Asp-199 lines the 5-phospho-alpha-D-ribose 1-diphosphate pocket.

It belongs to the UPRTase family. It depends on Mg(2+) as a cofactor.

It catalyses the reaction UMP + diphosphate = 5-phospho-alpha-D-ribose 1-diphosphate + uracil. Its pathway is pyrimidine metabolism; UMP biosynthesis via salvage pathway; UMP from uracil: step 1/1. With respect to regulation, allosterically activated by GTP. Its function is as follows. Catalyzes the conversion of uracil and 5-phospho-alpha-D-ribose 1-diphosphate (PRPP) to UMP and diphosphate. The chain is Uracil phosphoribosyltransferase from Mycoplasmopsis agalactiae (strain NCTC 10123 / CIP 59.7 / PG2) (Mycoplasma agalactiae).